The chain runs to 374 residues: CC-adding tRNA nucleotidyltransferase (374 aa).

39-42 (GAVR) is a binding site for CTP. Mg(2+) is bound by residues D52 and D54. Residues 126–127 (RD), N131, 171–180 (DASRLVRAAR), and R209 each bind CTP.

Belongs to the tRNA nucleotidyltransferase/poly(A) polymerase family. Mg(2+) serves as cofactor.

It catalyses the reaction a tRNA precursor + 2 CTP = a tRNA with a 3' CC end + 2 diphosphate. TRNA nucleotidyltransferase involved in the synthesis of the tRNA CCA terminus. Adds the two cytidine residues to tRNA. The sequence is that of CC-adding tRNA nucleotidyltransferase from Deinococcus radiodurans (strain ATCC 13939 / DSM 20539 / JCM 16871 / CCUG 27074 / LMG 4051 / NBRC 15346 / NCIMB 9279 / VKM B-1422 / R1).